A 196-amino-acid polypeptide reads, in one-letter code: RNA-binding protein with multiple splicing (196 aa).

Position 1 is an N-acetylmethionine (methionine 1). At threonine 12 the chain carries Phosphothreonine. Positions 24–101 (RTLFVSGLPL…QTLRLEFAKA (78 aa)) constitute an RRM domain. The interaction with RNA stretch occupies residues 98 to 105 (FAKANTKM). Threonine 113 is modified (phosphothreonine).

As to quaternary structure, homodimer; each protein chain binds one RNA molecule via the external surface of the homodimer. Interacts with RNA binding proteins MBNL1, RBFOX2, RBM4 and RBM14; the interaction allows cooperative assembly of stable cell-specific alternative splicing regulatory complexes. Interacts with SMAD2, SMAD3 and SMAD4; the interactions are direct. As to expression, ubiquitously expressed, at various levels depending on the isoform and the tissue. Strongly expressed in the heart, prostate, small intestine, large intestine, and ovary; moderately expressed in the placenta, lung, liver, kidney, pancreas, and testis; and poorly expressed in the skeletal muscle, spleen, thymus and peripheral leukocytes.

The protein localises to the nucleus. It localises to the cytoplasm. The protein resides in the stress granule. It is found in the P-body. Functionally, RNA binding protein that mediates the regulation of pre-mRNA alternative splicing (AS). Acts either as activator (FLNB, HSPG2, LIPA1, MYOCD, PTPRF and PPFIBP1) or repressor (TPM1, ACTN1, ITGA7, PIEZO1, LSM14B, MBNL1 and MBML2) of splicing events on specific pre-mRNA targets. Together with RNA binding proteins RBFOX2 and MBNL1/2, activates a splicing program associated with differentiated contractile vascular smooth muscle cells (SMC) by regulating AS of numerous pre-mRNA involved in actin cytoskeleton and focal adhesion machineries, suggesting a role in promoting a cell differentiated state. Binds to introns, exons and 3'-UTR associated with tandem CAC trinucleotide motifs separated by a variable spacer region, at a minimum as a dimer. The minimal length of RNA required for RBPMS-binding tandem CAC motifs is 15 nt, with spacing ranging from 1 to 9 nt. Can also bind to CA dinucleotide repeats. Mediates repression of TPM1 exon 3 by binding to CAC tandem repeats in the flanking intronic regions, followed by higher-order oligomerization and heterotypic interactions with other splicing regulators including MBNL1 and RBFOX2, which prevents assembly of ATP-dependent splicing complexes. Its function is as follows. Acts as a regulator of pre-mRNA alternative splicing (AS). Binds mRNA. Regulates AS of ACTN1, FLNB, although with lower efficiency than isoform A / RBPMSA. Acts as coactivator of SMAD transcriptional activity in a TGFB1-dependent manner, possibly through increased phosphorylation of SMAD2 and SMAD3 at the C-terminal SSXS regions and promotion of the nuclear accumulation of SMAD proteins. The sequence is that of RNA-binding protein with multiple splicing from Homo sapiens (Human).